Consider the following 41-residue polypeptide: Large ribosomal subunit protein bL36 (41 aa).

It belongs to the bacterial ribosomal protein bL36 family.

This Rickettsia canadensis (strain McKiel) protein is Large ribosomal subunit protein bL36.